The primary structure comprises 270 residues: Cyclase-like protein 3 (270 aa).

A signal peptide spans Met-1–Ala-23.

It belongs to the Cyclase 1 superfamily. In terms of tissue distribution, highly expressed in leaf sheaths. leaf collars and flag leaves. Expressed in roots, stems, glumes, young panicles and pistils.

The protein resides in the secreted. It is found in the extracellular space. It localises to the extracellular matrix. Functionally, may be involved in response to stresses. The polypeptide is Cyclase-like protein 3 (Oryza sativa subsp. japonica (Rice)).